An 87-amino-acid polypeptide reads, in one-letter code: Probable Fe(2+)-trafficking protein (87 aa).

Belongs to the Fe(2+)-trafficking protein family.

Could be a mediator in iron transactions between iron acquisition and iron-requiring processes, such as synthesis and/or repair of Fe-S clusters in biosynthetic enzymes. The polypeptide is Probable Fe(2+)-trafficking protein (Francisella philomiragia subsp. philomiragia (strain ATCC 25017 / CCUG 19701 / FSC 153 / O#319-036)).